The primary structure comprises 857 residues: Catalase-peroxidase (857 aa).

Residues 207-330 (WHSAGTYRVS…LAAVQMGLIY (124 aa)) constitute a cross-link (tryptophyl-tyrosyl-methioninium (Trp-Tyr) (with M-356)). His208 acts as the Proton acceptor in catalysis. Residues 330-356 (YVNPEGPNGKPDPIAAAKDIRETFGRM) constitute a cross-link (tryptophyl-tyrosyl-methioninium (Tyr-Met) (with W-207)). His371 serves as a coordination point for heme b.

Belongs to the peroxidase family. Peroxidase/catalase subfamily. As to quaternary structure, homodimer or homotetramer. It depends on heme b as a cofactor. Post-translationally, formation of the three residue Trp-Tyr-Met cross-link is important for the catalase, but not the peroxidase activity of the enzyme.

It carries out the reaction H2O2 + AH2 = A + 2 H2O. The enzyme catalyses 2 H2O2 = O2 + 2 H2O. In terms of biological role, bifunctional enzyme with both catalase and broad-spectrum peroxidase activity. In Rhodopirellula baltica (strain DSM 10527 / NCIMB 13988 / SH1), this protein is Catalase-peroxidase.